Reading from the N-terminus, the 892-residue chain is E3 ubiquitin ligase PQT3-like (892 aa).

Positions isoleucine 3–proline 76 constitute a DWNN domain. The CCHC-type zinc-finger motif lies at cysteine 210–proline 224. At serine 285 the chain carries Phosphoserine. The RING-type; degenerate zinc-finger motif lies at cysteine 295 to cysteine 333. Disordered stretches follow at residues aspartate 375 to aspartate 408, threonine 459 to asparagine 493, and methionine 623 to alanine 892. Serine 404 carries the phosphoserine modification. The span at methionine 623–asparagine 644 shows a compositional bias: basic and acidic residues. The span at methionine 647–arginine 666 shows a compositional bias: polar residues. Residues histidine 674–proline 692 are compositionally biased toward basic and acidic residues. The Nuclear localization signal signature appears at threonine 693 to serine 700. The span at glutamate 708 to arginine 745 shows a compositional bias: basic and acidic residues. Over residues serine 810–serine 832 the composition is skewed to low complexity. Serine 866 carries the phosphoserine modification. Residues serine 875–alanine 892 are compositionally biased toward basic and acidic residues.

The protein resides in the nucleus. The catalysed reaction is S-ubiquitinyl-[E2 ubiquitin-conjugating enzyme]-L-cysteine + [acceptor protein]-L-lysine = [E2 ubiquitin-conjugating enzyme]-L-cysteine + N(6)-ubiquitinyl-[acceptor protein]-L-lysine.. The chain is E3 ubiquitin ligase PQT3-like from Arabidopsis thaliana (Mouse-ear cress).